The chain runs to 493 residues: Protein dml1 (493 aa).

Belongs to the misato family.

The protein resides in the mitochondrion. In terms of biological role, involved in the partitioning of the mitochondrial organelle and mitochondrial DNA (mtDNA) inheritance. The chain is Protein dml1 (dml1) from Aspergillus oryzae (strain ATCC 42149 / RIB 40) (Yellow koji mold).